The following is a 367-amino-acid chain: Alanine racemase (367 aa).

The active-site Proton acceptor; specific for D-alanine is K34. K34 carries the post-translational modification N6-(pyridoxal phosphate)lysine. R131 is a binding site for substrate. Residue Y258 is the Proton acceptor; specific for L-alanine of the active site. Residue M306 participates in substrate binding.

This sequence belongs to the alanine racemase family. The cofactor is pyridoxal 5'-phosphate.

The enzyme catalyses L-alanine = D-alanine. It functions in the pathway amino-acid biosynthesis; D-alanine biosynthesis; D-alanine from L-alanine: step 1/1. In terms of biological role, catalyzes the interconversion of L-alanine and D-alanine. May also act on other amino acids. This is Alanine racemase (alr) from Corynebacterium efficiens (strain DSM 44549 / YS-314 / AJ 12310 / JCM 11189 / NBRC 100395).